A 417-amino-acid chain; its full sequence is MGAALLCSFAHAEVVPLDRVVAIVDNDVIMQSQLDQRLREVHQTLLKRGAPLPPEHVLTQQVLERLIIENIQQQIGDRSGIRISDEELNQAMGTIAQRNGMSLEQFQTALTRDGLSYADAREQVRREMVISRVRQRRVAERIQVSEQEVKNFLASDMGKIQLSEEYRLANILIPVPEAASSDVIQAAARQAQELYQQLKQGADFGQLAISRSAGDNALEGGEIGWRKAAQLPQPFDSMIGSLAVGDVTEPVRTPGGFIILKLEEKRGGSKMVRDEVHVRHILLKPSEIRSEAETEKLAQKLYERIQSGEDFGELAKSFSEDPGSALNGGDLNWIDPEALVPEFRQVMNDTPQGELSKPFRSQFGWHILQVLGRRATDSSEKFREQQAVSVLRNRKYDEELQAWLRQIRDEAYVEIKQ.

The first 12 residues, 1–12 (MGAALLCSFAHA), serve as a signal peptide directing secretion. PpiC domains follow at residues 163-264 (SEEY…KLEE) and 273-372 (RDEV…QVLG).

It is found in the periplasm. The catalysed reaction is [protein]-peptidylproline (omega=180) = [protein]-peptidylproline (omega=0). Its function is as follows. Chaperone involved in the correct folding and assembly of outer membrane proteins. Recognizes specific patterns of aromatic residues and the orientation of their side chains, which are found more frequently in integral outer membrane proteins. May act in both early periplasmic and late outer membrane-associated steps of protein maturation. This Pseudomonas aeruginosa (strain ATCC 15692 / DSM 22644 / CIP 104116 / JCM 14847 / LMG 12228 / 1C / PRS 101 / PAO1) protein is Chaperone SurA.